The primary structure comprises 149 residues: Cytochrome c-555 (149 aa).

Positions 1-20 (MKRTMIVVTTLLLGAGAVMA) are cleaved as a signal peptide. Positions 32, 137, 140, and 141 each coordinate heme c.

In terms of assembly, monomer. In terms of processing, binds 1 heme c group covalently per subunit.

The protein localises to the periplasm. In terms of biological role, low-spin monoheme cytochrome. The protein is Cytochrome c-555 (cycC) of Bradyrhizobium diazoefficiens (strain JCM 10833 / BCRC 13528 / IAM 13628 / NBRC 14792 / USDA 110).